A 343-amino-acid chain; its full sequence is 4-hydroxy-2-oxovalerate aldolase 2 (343 aa).

The region spanning 5 to 255 (ITIVDTTLRD…DTGVDLFPLI (251 aa)) is the Pyruvate carboxyltransferase domain. Residues 13–14 (RD), Ser-167, and His-194 each bind substrate. Residue Asp-14 participates in Mn(2+) binding. Residues His-194 and His-196 each contribute to the Mn(2+) site. Position 285 (Tyr-285) interacts with substrate.

The protein belongs to the 4-hydroxy-2-oxovalerate aldolase family.

It carries out the reaction (S)-4-hydroxy-2-oxopentanoate = acetaldehyde + pyruvate. The chain is 4-hydroxy-2-oxovalerate aldolase 2 from Rhodococcus jostii (strain RHA1).